The sequence spans 328 residues: GTP 3',8-cyclase (328 aa).

A Radical SAM core domain is found at 1-229; the sequence is MNQVDYLRIS…DAQVRGAGPA (229 aa). R8 provides a ligand contact to GTP. C15 and C19 together coordinate [4Fe-4S] cluster. Position 21 (Y21) interacts with S-adenosyl-L-methionine. Position 22 (C22) interacts with [4Fe-4S] cluster. R60 is a binding site for GTP. G64 is a binding site for S-adenosyl-L-methionine. T91 contributes to the GTP binding site. Residue S115 participates in S-adenosyl-L-methionine binding. K155 contributes to the GTP binding site. M189 lines the S-adenosyl-L-methionine pocket. Positions 252 and 255 each coordinate [4Fe-4S] cluster. 257 to 259 is a binding site for GTP; sequence RMR. C269 contributes to the [4Fe-4S] cluster binding site.

It belongs to the radical SAM superfamily. MoaA family. In terms of assembly, monomer and homodimer. Requires [4Fe-4S] cluster as cofactor.

The enzyme catalyses GTP + AH2 + S-adenosyl-L-methionine = (8S)-3',8-cyclo-7,8-dihydroguanosine 5'-triphosphate + 5'-deoxyadenosine + L-methionine + A + H(+). It participates in cofactor biosynthesis; molybdopterin biosynthesis. Its function is as follows. Catalyzes the cyclization of GTP to (8S)-3',8-cyclo-7,8-dihydroguanosine 5'-triphosphate. The protein is GTP 3',8-cyclase of Nostoc sp. (strain PCC 7120 / SAG 25.82 / UTEX 2576).